The following is a 462-amino-acid chain: Ketoisovalerate reductase (462 aa).

The tract at residues 34 to 55 (PTAVKPDRADRGDFDPGKYPVD) is disordered. Over residues 38–49 (KPDRADRGDFDP) the composition is skewed to basic and acidic residues. 72–77 (GPGNVG) is a binding site for NADP(+). The short motif at 167 to 184 (ADRLRRYLGRCSSVVFAQ) is the Calmoduling-binding element. Lysine 290 (proton donor) is an active-site residue. Residues asparagine 294, asparagine 298, and serine 403 each contribute to the substrate site. An NADP(+)-binding site is contributed by glutamate 415.

Belongs to the ketopantoate reductase family. In terms of assembly, homodimer. Binds to calmodulin in a calcium-independent manner.

It catalyses the reaction (R)-2-hydroxy-3-methylbutanoate + NADP(+) = 3-methyl-2-oxobutanoate + NADPH + H(+). With respect to regulation, environmental stimuli such as light and salt stress suppress activity through stimulation of calmodulin (CaM) that binds BEA2 and probably impairs its dimerization. Functionally, ketoisovalerate reductase; part of the gene cluster that mediates the biosynthesis of beauvericin (BEA), a non-ribosomal cyclic hexadepsipeptide that shows antibiotic, antifungal, insecticidal, and cancer cell antiproliferative and antihaptotactic activity. Ketoisovalerate reductase BEA2 catalyzes the NADPH-specific reduction of ketoisovaleric acid to hydroxyisovalerate, a precursor for beauvericin biosynthesis. The nonribosomal cyclodepsipeptide synthetase BEA1 then catalyzes the formation of beauvericin via condensation and cyclization of 3 dipeptidol monomers, each composed of one unit of hydroxyisovalerate and one unit of N-methyl-phenylalanine. This Beauveria bassiana (White muscardine disease fungus) protein is Ketoisovalerate reductase.